We begin with the raw amino-acid sequence, 103 residues long: PTS system lactose-specific EIIA component (103 aa).

The 102-residue stretch at 1 to 102 (MNREEVQLLG…MKHLLEFYKR (102 aa)) folds into the PTS EIIA type-3 domain. Residue His-78 is the Tele-phosphohistidine intermediate of the active site. The residue at position 78 (His-78) is a Phosphohistidine; by HPr. Asp-81 is a binding site for Mg(2+).

In terms of assembly, homotrimer. The cofactor is Mg(2+).

It is found in the cytoplasm. In terms of biological role, the phosphoenolpyruvate-dependent sugar phosphotransferase system (sugar PTS), a major carbohydrate active transport system, catalyzes the phosphorylation of incoming sugar substrates concomitantly with their translocation across the cell membrane. The enzyme II LacEF PTS system is involved in lactose transport. The protein is PTS system lactose-specific EIIA component of Staphylococcus aureus (strain COL).